The following is a 621-amino-acid chain: Putative DNA 3'-5' helicase Rad25 (621 aa).

The Helicase ATP-binding domain maps to 268–417 (VERFTEQGSG…EIFTLIGPPI (150 aa)). Residue 281–288 (GPPGSGKT) coordinates ATP. The DEAH box motif lies at 371 to 374 (DEVH). The tract at residues 441 to 465 (PWGDETEQSEYSSTSGHDRRQAAAS) is disordered. The Helicase C-terminal domain occupies 469–621 (KIDEIRYALA…EAVEPPAKTE (153 aa)).

This sequence belongs to the helicase family. RAD25/XPB subfamily.

It carries out the reaction Couples ATP hydrolysis with the unwinding of duplex DNA by translocating in the 3'-5' direction.. The enzyme catalyses ATP + H2O = ADP + phosphate + H(+). The chain is Putative DNA 3'-5' helicase Rad25 from Haloarcula marismortui (strain ATCC 43049 / DSM 3752 / JCM 8966 / VKM B-1809) (Halobacterium marismortui).